Here is a 119-residue protein sequence, read N- to C-terminus: Basic phospholipase A2 homolog 1 (119 aa).

7 cysteine pairs are disulfide-bonded: Cys-11/Cys-72, Cys-27/Cys-118, Cys-29/Cys-45, Cys-44/Cys-99, Cys-51/Cys-92, Cys-61/Cys-85, and Cys-79/Cys-90. Residues 107-117 form an important for membrane-damaging activities in eukaryotes and bacteria; heparin-binding region; that stretch reads KENYNIDPKKR.

This sequence belongs to the phospholipase A2 family. Group I subfamily. D49 sub-subfamily. Expressed by the venom gland.

The protein localises to the secreted. The protein is Basic phospholipase A2 homolog 1 of Notechis scutatus scutatus (Mainland tiger snake).